Consider the following 582-residue polypeptide: Aspartate--tRNA ligase (582 aa).

Glutamate 174 provides a ligand contact to L-aspartate. An aspartate region spans residues 198 to 201 (QITK). Arginine 220 serves as a coordination point for L-aspartate. ATP is bound by residues 220–222 (RDE) and glutamine 229. Histidine 443 lines the L-aspartate pocket. Glutamate 477 is an ATP binding site. L-aspartate is bound at residue arginine 484. Residue 529–532 (GLDR) participates in ATP binding.

The protein belongs to the class-II aminoacyl-tRNA synthetase family. Type 1 subfamily. As to quaternary structure, homodimer.

It localises to the cytoplasm. The enzyme catalyses tRNA(Asp) + L-aspartate + ATP = L-aspartyl-tRNA(Asp) + AMP + diphosphate. Catalyzes the attachment of L-aspartate to tRNA(Asp) in a two-step reaction: L-aspartate is first activated by ATP to form Asp-AMP and then transferred to the acceptor end of tRNA(Asp). The sequence is that of Aspartate--tRNA ligase from Streptococcus pyogenes serotype M28 (strain MGAS6180).